Reading from the N-terminus, the 448-residue chain is Probable glycine dehydrogenase (decarboxylating) subunit 1 (448 aa).

It belongs to the GcvP family. N-terminal subunit subfamily. The glycine cleavage system is composed of four proteins: P, T, L and H. In this organism, the P 'protein' is a heterodimer of two subunits.

It catalyses the reaction N(6)-[(R)-lipoyl]-L-lysyl-[glycine-cleavage complex H protein] + glycine + H(+) = N(6)-[(R)-S(8)-aminomethyldihydrolipoyl]-L-lysyl-[glycine-cleavage complex H protein] + CO2. In terms of biological role, the glycine cleavage system catalyzes the degradation of glycine. The P protein binds the alpha-amino group of glycine through its pyridoxal phosphate cofactor; CO(2) is released and the remaining methylamine moiety is then transferred to the lipoamide cofactor of the H protein. This is Probable glycine dehydrogenase (decarboxylating) subunit 1 from Staphylococcus aureus (strain USA300).